Reading from the N-terminus, the 274-residue chain is tRNA-cytidine(32) 2-sulfurtransferase (274 aa).

A PP-loop motif motif is present at residues 40–45 (SGGKDS). The [4Fe-4S] cluster site is built by Cys-115, Cys-118, and Cys-206.

Belongs to the TtcA family. As to quaternary structure, homodimer. The cofactor is Mg(2+). It depends on [4Fe-4S] cluster as a cofactor.

Its subcellular location is the cytoplasm. The catalysed reaction is cytidine(32) in tRNA + S-sulfanyl-L-cysteinyl-[cysteine desulfurase] + AH2 + ATP = 2-thiocytidine(32) in tRNA + L-cysteinyl-[cysteine desulfurase] + A + AMP + diphosphate + H(+). It participates in tRNA modification. Catalyzes the ATP-dependent 2-thiolation of cytidine in position 32 of tRNA, to form 2-thiocytidine (s(2)C32). The sulfur atoms are provided by the cysteine/cysteine desulfurase (IscS) system. The protein is tRNA-cytidine(32) 2-sulfurtransferase of Pseudomonas putida (strain ATCC 700007 / DSM 6899 / JCM 31910 / BCRC 17059 / LMG 24140 / F1).